Here is a 30-residue protein sequence, read N- to C-terminus: Conotoxin TVIIA (30 aa).

3 cysteine pairs are disulfide-bonded: C2–C14, C9–C19, and C13–C24. 4-hydroxyproline is present on residues P10 and P11.

In terms of processing, three different forms of TVIIA exist. Pro-10 and Pro-11 of conotoxin TVIIA are hydroxylated in TVIIA, whereas Pro-10 is not hydroxylated in [Pro10]TVIIA and neither Pro-10 nor Pro-11 are hydroxylated in [Pro10,11]TVIIA. In terms of tissue distribution, expressed by the venom duct.

It localises to the secreted. Functionally, by structural similarity with conotoxin GS, may inhibit the sodium channel (Nav). No effect was observed upon intracranial injections into mice and intraperitoneal injections into goldfish (25 ug). In Conus tulipa (Fish-hunting cone snail), this protein is Conotoxin TVIIA.